We begin with the raw amino-acid sequence, 278 residues long: ATP synthase subunit a (278 aa).

A run of 6 helical transmembrane segments spans residues 41–61 (FLNI…LLFF), 108–128 (LTIF…VDFV), 149–168 (INIT…YFGI), 180–200 (FFFQ…LELI), 222–242 (LIFI…LSVP), and 244–264 (AIFH…LTII).

This sequence belongs to the ATPase A chain family. In terms of assembly, F-type ATPases have 2 components, CF(1) - the catalytic core - and CF(0) - the membrane proton channel. CF(1) has five subunits: alpha(3), beta(3), gamma(1), delta(1), epsilon(1). CF(0) has three main subunits: a(1), b(2) and c(9-12). The alpha and beta chains form an alternating ring which encloses part of the gamma chain. CF(1) is attached to CF(0) by a central stalk formed by the gamma and epsilon chains, while a peripheral stalk is formed by the delta and b chains.

The protein resides in the cell membrane. Key component of the proton channel; it plays a direct role in the translocation of protons across the membrane. This Wigglesworthia glossinidia brevipalpis protein is ATP synthase subunit a.